Reading from the N-terminus, the 805-residue chain is DNA gyrase subunit B (805 aa).

The 116-residue stretch at 435 to 550 (SEIFIVEGDS…RGYIYIAQPP (116 aa)) folds into the Toprim domain. Mg(2+) is bound by residues E441, D515, and D517.

This sequence belongs to the type II topoisomerase GyrB family. As to quaternary structure, heterotetramer, composed of two GyrA and two GyrB chains. In the heterotetramer, GyrA contains the active site tyrosine that forms a transient covalent intermediate with DNA, while GyrB binds cofactors and catalyzes ATP hydrolysis. It depends on Mg(2+) as a cofactor. Mn(2+) is required as a cofactor. Ca(2+) serves as cofactor.

The protein localises to the cytoplasm. The enzyme catalyses ATP-dependent breakage, passage and rejoining of double-stranded DNA.. A type II topoisomerase that negatively supercoils closed circular double-stranded (ds) DNA in an ATP-dependent manner to modulate DNA topology and maintain chromosomes in an underwound state. Negative supercoiling favors strand separation, and DNA replication, transcription, recombination and repair, all of which involve strand separation. Also able to catalyze the interconversion of other topological isomers of dsDNA rings, including catenanes and knotted rings. Type II topoisomerases break and join 2 DNA strands simultaneously in an ATP-dependent manner. This is DNA gyrase subunit B from Caulobacter vibrioides (strain ATCC 19089 / CIP 103742 / CB 15) (Caulobacter crescentus).